The chain runs to 474 residues: GTPase Der (474 aa).

EngA-type G domains lie at 2 to 166 and 212 to 385; these read LRIA…NVPE and LKIA…TTVS. GTP contacts are provided by residues 8–15, 55–59, 118–121, 218–225, 265–269, and 330–333; these read GRPNVGKS, DTGGV, NKAD, DTAGL, and NKWD. In terms of domain architecture, KH-like spans 386 to 470; that stretch reads SKVPTPVVNK…PFDLEFKEKT (85 aa).

It belongs to the TRAFAC class TrmE-Era-EngA-EngB-Septin-like GTPase superfamily. EngA (Der) GTPase family. Associates with the 50S ribosomal subunit.

In terms of biological role, GTPase that plays an essential role in the late steps of ribosome biogenesis. The sequence is that of GTPase Der from Chlamydia abortus (strain DSM 27085 / S26/3) (Chlamydophila abortus).